Reading from the N-terminus, the 562-residue chain is Acetolactate synthase isozyme 1 large subunit (562 aa).

Glutamate 60 provides a ligand contact to thiamine diphosphate. Residues arginine 162, histidine 264–arginine 285, and aspartate 307–aspartate 326 each bind FAD. The interval glutamine 393 to alanine 473 is thiamine pyrophosphate binding. 2 residues coordinate Mg(2+): aspartate 444 and asparagine 471.

The protein belongs to the TPP enzyme family. As to quaternary structure, dimer of large and small chains. The cofactor is Mg(2+). It depends on thiamine diphosphate as a cofactor.

It catalyses the reaction 2 pyruvate + H(+) = (2S)-2-acetolactate + CO2. Its pathway is amino-acid biosynthesis; L-isoleucine biosynthesis; L-isoleucine from 2-oxobutanoate: step 1/4. It functions in the pathway amino-acid biosynthesis; L-valine biosynthesis; L-valine from pyruvate: step 1/4. In Escherichia coli (strain K12), this protein is Acetolactate synthase isozyme 1 large subunit (ilvB).